The primary structure comprises 220 residues: Deoxyribose-phosphate aldolase (220 aa).

The active-site Proton donor/acceptor is the aspartate 89. Lysine 151 serves as the catalytic Schiff-base intermediate with acetaldehyde. Catalysis depends on lysine 180, which acts as the Proton donor/acceptor.

Belongs to the DeoC/FbaB aldolase family. DeoC type 1 subfamily.

Its subcellular location is the cytoplasm. The enzyme catalyses 2-deoxy-D-ribose 5-phosphate = D-glyceraldehyde 3-phosphate + acetaldehyde. The protein operates within carbohydrate degradation; 2-deoxy-D-ribose 1-phosphate degradation; D-glyceraldehyde 3-phosphate and acetaldehyde from 2-deoxy-alpha-D-ribose 1-phosphate: step 2/2. In terms of biological role, catalyzes a reversible aldol reaction between acetaldehyde and D-glyceraldehyde 3-phosphate to generate 2-deoxy-D-ribose 5-phosphate. The chain is Deoxyribose-phosphate aldolase from Lactococcus lactis subsp. lactis (strain IL1403) (Streptococcus lactis).